We begin with the raw amino-acid sequence, 158 residues long: Non-secretory ribonuclease (158 aa).

A signal peptide spans M1–V27. A C-linked (Man) tryptophan glycan is attached at W34. H42 serves as the catalytic Proton acceptor. Disulfide bonds link C50–C110, C64–C121, C82–C136, and C89–C98. Y60 bears the 3'-nitrotyrosine mark. K65–T69 provides a ligand contact to substrate. N86, N92, and N111 each carry an N-linked (GlcNAc...) asparagine glycan. Residue H153 is the Proton donor of the active site.

It belongs to the pancreatic ribonuclease family. In terms of assembly, interacts with and forms a tight 1:1 complex with RNH1. Dimerization of two such complexes may occur.

The protein resides in the lysosome. It localises to the cytoplasmic granule. It carries out the reaction an [RNA] containing cytidine + H2O = an [RNA]-3'-cytidine-3'-phosphate + a 5'-hydroxy-ribonucleotide-3'-[RNA].. The catalysed reaction is an [RNA] containing uridine + H2O = an [RNA]-3'-uridine-3'-phosphate + a 5'-hydroxy-ribonucleotide-3'-[RNA].. In terms of biological role, this is a non-secretory ribonuclease. It is a pyrimidine specific nuclease with a slight preference for U. Cytotoxin and helminthotoxin. Possesses a wide variety of biological activities. The sequence is that of Non-secretory ribonuclease (RNASE2) from Saguinus oedipus (Cotton-top tamarin).